We begin with the raw amino-acid sequence, 143 residues long: MQFNISDIIKILPHSYPFLLVDRVIECDPGKSIKAIKNVTFNEPFFIGHFPGHPIMPGVLIIESLAQASAICVLGKETIENKVVYLRSIENAKFRKPVTPGDTLILQANIQSVCLGVHKFRCIASVSEEKVAEATISAVLQNK.

Residue histidine 49 is part of the active site.

The protein belongs to the thioester dehydratase family. FabZ subfamily.

It is found in the cytoplasm. The catalysed reaction is a (3R)-hydroxyacyl-[ACP] = a (2E)-enoyl-[ACP] + H2O. Its function is as follows. Involved in unsaturated fatty acids biosynthesis. Catalyzes the dehydration of short chain beta-hydroxyacyl-ACPs and long chain saturated and unsaturated beta-hydroxyacyl-ACPs. This Wolbachia sp. subsp. Drosophila simulans (strain wRi) protein is 3-hydroxyacyl-[acyl-carrier-protein] dehydratase FabZ.